The sequence spans 279 residues: Acetylglutamate kinase (279 aa).

Substrate is bound by residues 64–65 (GG), R86, and N177.

Belongs to the acetylglutamate kinase family. ArgB subfamily.

It localises to the cytoplasm. The catalysed reaction is N-acetyl-L-glutamate + ATP = N-acetyl-L-glutamyl 5-phosphate + ADP. Its pathway is amino-acid biosynthesis; L-arginine biosynthesis; N(2)-acetyl-L-ornithine from L-glutamate: step 2/4. Catalyzes the ATP-dependent phosphorylation of N-acetyl-L-glutamate. This chain is Acetylglutamate kinase, found in Campylobacter jejuni subsp. doylei (strain ATCC BAA-1458 / RM4099 / 269.97).